The sequence spans 581 residues: Arginine--tRNA ligase (581 aa).

The short motif at 126-136 (PNLAKEMHVGH) is the 'HIGH' region element.

Belongs to the class-I aminoacyl-tRNA synthetase family. As to quaternary structure, monomer.

It is found in the cytoplasm. The enzyme catalyses tRNA(Arg) + L-arginine + ATP = L-arginyl-tRNA(Arg) + AMP + diphosphate. The chain is Arginine--tRNA ligase from Shewanella amazonensis (strain ATCC BAA-1098 / SB2B).